The chain runs to 285 residues: Malonyl-[acyl-carrier protein] O-methyltransferase (285 aa).

Belongs to the methyltransferase superfamily.

It catalyses the reaction malonyl-[ACP] + S-adenosyl-L-methionine = malonyl-[ACP] methyl ester + S-adenosyl-L-homocysteine. Its pathway is cofactor biosynthesis; biotin biosynthesis. Converts the free carboxyl group of a malonyl-thioester to its methyl ester by transfer of a methyl group from S-adenosyl-L-methionine (SAM). It allows to synthesize pimeloyl-ACP via the fatty acid synthetic pathway. The sequence is that of Malonyl-[acyl-carrier protein] O-methyltransferase from Bacillus cytotoxicus (strain DSM 22905 / CIP 110041 / 391-98 / NVH 391-98).